A 273-amino-acid polypeptide reads, in one-letter code: Large ribosomal subunit protein uL2 (273 aa).

Residues 221–263 are disordered; the sequence is RGTAMNPVDHPHGGGEGRNFGKHPVTPWGVQTKGKKTRHNKRT. A compositionally biased stretch (basic residues) spans 253 to 263; that stretch reads KGKKTRHNKRT.

It belongs to the universal ribosomal protein uL2 family. As to quaternary structure, part of the 50S ribosomal subunit. Forms a bridge to the 30S subunit in the 70S ribosome.

One of the primary rRNA binding proteins. Required for association of the 30S and 50S subunits to form the 70S ribosome, for tRNA binding and peptide bond formation. It has been suggested to have peptidyltransferase activity; this is somewhat controversial. Makes several contacts with the 16S rRNA in the 70S ribosome. This is Large ribosomal subunit protein uL2 from Histophilus somni (strain 129Pt) (Haemophilus somnus).